Consider the following 245-residue polypeptide: Eukaryotic translation initiation factor 6 (245 aa).

The protein belongs to the eIF-6 family. In terms of assembly, monomer. Associates with the 60S ribosomal subunit.

It localises to the cytoplasm. Its subcellular location is the nucleus. The protein resides in the nucleolus. Its function is as follows. Binds to the 60S ribosomal subunit and prevents its association with the 40S ribosomal subunit to form the 80S initiation complex in the cytoplasm. May also be involved in ribosome biogenesis. The protein is Eukaryotic translation initiation factor 6 (eif6) of Xenopus laevis (African clawed frog).